The primary structure comprises 178 residues: Interleukin-10 (178 aa).

The first 18 residues, 1–18 (MHSSALLCCLVLLTGVRA), serve as a signal peptide directing secretion. 2 cysteine pairs are disulfide-bonded: Cys-30–Cys-126 and Cys-80–Cys-132. N-linked (GlcNAc...) asparagine glycosylation occurs at Asn-134.

Belongs to the IL-10 family. As to quaternary structure, homodimer. Interacts with IL10RA and IL10RB. As to expression, produced by a variety of cell lines, including T-cells, macrophages, mast cells and other cell types.

It localises to the secreted. Its function is as follows. Major immune regulatory cytokine that acts on many cells of the immune system where it has profound anti-inflammatory functions, limiting excessive tissue disruption caused by inflammation. Mechanistically, IL10 binds to its heterotetrameric receptor comprising IL10RA and IL10RB leading to JAK1 and STAT2-mediated phosphorylation of STAT3. In turn, STAT3 translocates to the nucleus where it drives expression of anti-inflammatory mediators. Targets antigen-presenting cells (APCs) such as macrophages and monocytes and inhibits their release of pro-inflammatory cytokines including granulocyte-macrophage colony-stimulating factor /GM-CSF, granulocyte colony-stimulating factor/G-CSF, IL-1 alpha, IL-1 beta, IL-6, IL-8 and TNF-alpha. Also interferes with antigen presentation by reducing the expression of MHC-class II and co-stimulatory molecules, thereby inhibiting their ability to induce T cell activation. In addition, controls the inflammatory response of macrophages by reprogramming essential metabolic pathways including mTOR signaling. The polypeptide is Interleukin-10 (IL10) (Homo sapiens (Human)).